Here is a 529-residue protein sequence, read N- to C-terminus: Protein PNS1 (529 aa).

The segment at Met-1–Gly-58 is disordered. At Met-1 to Pro-84 the chain is on the cytoplasmic side. A compositionally biased stretch (low complexity) spans Pro-22–Pro-48. Residues Ile-85 to Leu-105 form a helical membrane-spanning segment. Topologically, residues Arg-106–Ala-132 are extracellular. A glycan (N-linked (GlcNAc...) asparagine) is linked at Asn-114. A helical membrane pass occupies residues Ile-133–Val-153. Over Arg-154 to Lys-158 the chain is Cytoplasmic. Residues Ile-159–Leu-179 form a helical membrane-spanning segment. The Extracellular segment spans residues Trp-180–Asn-184. Residues Thr-185–Met-205 traverse the membrane as a helical segment. The Cytoplasmic portion of the chain corresponds to Arg-206 to Tyr-230. Residues Val-231–Val-251 traverse the membrane as a helical segment. Residues Val-252–Asn-271 lie on the Extracellular side of the membrane. Residue Asn-271 is glycosylated (N-linked (GlcNAc...) asparagine). A helical membrane pass occupies residues Ala-272–Ile-292. Topologically, residues Lys-293–Asn-294 are cytoplasmic. A helical membrane pass occupies residues Ile-295–Ala-315. Topologically, residues Asn-316 to Ser-325 are extracellular. The helical transmembrane segment at Met-326–Leu-346 threads the bilayer. Over Arg-347–Asp-362 the chain is Cytoplasmic. The helical transmembrane segment at Met-363–Val-383 threads the bilayer. At Asp-384–Asn-427 the chain is on the extracellular side. Asn-422 is a glycosylation site (N-linked (GlcNAc...) asparagine). The chain crosses the membrane as a helical span at residues Ile-428–Tyr-448. The Cytoplasmic portion of the chain corresponds to Glu-449–Tyr-464. A helical transmembrane segment spans residues Ser-465–Gly-485. The Extracellular portion of the chain corresponds to Ser-486 to His-529.

Belongs to the CTL (choline transporter-like) family.

It is found in the cell membrane. Functionally, probably involved in transport through the plasma membrane. In Mycosarcoma maydis (Corn smut fungus), this protein is Protein PNS1 (PNS1).